We begin with the raw amino-acid sequence, 268 residues long: Tryptophan synthase alpha chain (268 aa).

Residues Glu-49 and Asp-60 each act as proton acceptor in the active site.

The protein belongs to the TrpA family. Tetramer of two alpha and two beta chains.

It catalyses the reaction (1S,2R)-1-C-(indol-3-yl)glycerol 3-phosphate + L-serine = D-glyceraldehyde 3-phosphate + L-tryptophan + H2O. It functions in the pathway amino-acid biosynthesis; L-tryptophan biosynthesis; L-tryptophan from chorismate: step 5/5. In terms of biological role, the alpha subunit is responsible for the aldol cleavage of indoleglycerol phosphate to indole and glyceraldehyde 3-phosphate. The polypeptide is Tryptophan synthase alpha chain (Yersinia pseudotuberculosis serotype O:1b (strain IP 31758)).